A 417-amino-acid polypeptide reads, in one-letter code: UDP-N-acetylglucosamine 1-carboxyvinyltransferase (417 aa).

22-23 serves as a coordination point for phosphoenolpyruvate; sequence KN. A UDP-N-acetyl-alpha-D-glucosamine-binding site is contributed by Arg-91. The Proton donor role is filled by Cys-115. Cys-115 carries the 2-(S-cysteinyl)pyruvic acid O-phosphothioketal modification. UDP-N-acetyl-alpha-D-glucosamine contacts are provided by residues 120–124, Asp-304, and Ile-326; that span reads RPVDL.

Belongs to the EPSP synthase family. MurA subfamily.

It localises to the cytoplasm. It carries out the reaction phosphoenolpyruvate + UDP-N-acetyl-alpha-D-glucosamine = UDP-N-acetyl-3-O-(1-carboxyvinyl)-alpha-D-glucosamine + phosphate. It participates in cell wall biogenesis; peptidoglycan biosynthesis. Functionally, cell wall formation. Adds enolpyruvyl to UDP-N-acetylglucosamine. This chain is UDP-N-acetylglucosamine 1-carboxyvinyltransferase, found in Nitratidesulfovibrio vulgaris (strain DSM 19637 / Miyazaki F) (Desulfovibrio vulgaris).